The following is a 269-amino-acid chain: Phosphate import ATP-binding protein PstB (269 aa).

In terms of domain architecture, ABC transporter spans 14 to 253; that stretch reads LTLEDVSISY…EFDSTKKIFS (240 aa). 46-53 lines the ATP pocket; that stretch reads GPSGCGKS.

It belongs to the ABC transporter superfamily. Phosphate importer (TC 3.A.1.7) family. In terms of assembly, the complex is composed of two ATP-binding proteins (PstB), two transmembrane proteins (PstC and PstA) and a solute-binding protein (PstS).

It localises to the cell inner membrane. It catalyses the reaction phosphate(out) + ATP + H2O = ADP + 2 phosphate(in) + H(+). Its function is as follows. Part of the ABC transporter complex PstSACB involved in phosphate import. Responsible for energy coupling to the transport system. The sequence is that of Phosphate import ATP-binding protein PstB from Prochlorococcus marinus subsp. pastoris (strain CCMP1986 / NIES-2087 / MED4).